We begin with the raw amino-acid sequence, 255 residues long: F-box only protein 44 (255 aa).

Positions 3–50 (VGNINELPENILLELFTHVPARQLLLNCRLVCSLWRDLIDLVTLWKRK) constitute an F-box domain. The FBA domain maps to 71–252 (FYFLRSLHRN…VTNSSITIGP (182 aa)).

Part of a SCF (SKP1-cullin-F-box) protein ligase complex. Interacts with SKP1 and CUL1. In terms of tissue distribution, abundantly expressed in brain and kidney. Expressed at lower levels in heart, spleen and liver.

In terms of biological role, substrate-recognition component of the SCF (SKP1-CUL1-F-box protein)-type E3 ubiquitin ligase complex. In Homo sapiens (Human), this protein is F-box only protein 44 (FBXO44).